The primary structure comprises 391 residues: Small ribosomal subunit protein bS1 (391 aa).

4 S1 motif domains span residues 16–90 (GDKV…LSRR), 108–173 (NEII…LSRK), 194–262 (GDVI…LSIK), and 279–348 (NDDI…LSIK). Residues 356-381 (VVESDPSTTKAYLESEEEDNPTIGDM) are disordered.

Belongs to the bacterial ribosomal protein bS1 family.

Functionally, binds mRNA; thus facilitating recognition of the initiation point. It is needed to translate mRNA with a short Shine-Dalgarno (SD) purine-rich sequence. This chain is Small ribosomal subunit protein bS1 (rpsA), found in Staphylococcus aureus (strain MRSA252).